Here is a 419-residue protein sequence, read N- to C-terminus: Adenylosuccinate synthetase (419 aa).

GTP-binding positions include 11–17 and 39–41; these read GDEGKGK and GHS. The active-site Proton acceptor is aspartate 12. Positions 12 and 39 each coordinate Mg(2+). IMP-binding positions include 12–15, 37–40, threonine 129, arginine 143, asparagine 221, threonine 236, and arginine 296; these read DEGK and NAGH. Histidine 40 functions as the Proton donor in the catalytic mechanism. Substrate is bound at residue 292–298; that stretch reads VSTGRKR. Residues arginine 298, 324-326, and 408-410 contribute to the GTP site; these read KLD and GTG.

The protein belongs to the adenylosuccinate synthetase family. Homodimer. Mg(2+) serves as cofactor.

It localises to the cytoplasm. The catalysed reaction is IMP + L-aspartate + GTP = N(6)-(1,2-dicarboxyethyl)-AMP + GDP + phosphate + 2 H(+). It functions in the pathway purine metabolism; AMP biosynthesis via de novo pathway; AMP from IMP: step 1/2. Its function is as follows. Plays an important role in the de novo pathway and in the salvage pathway of purine nucleotide biosynthesis. Catalyzes the first committed step in the biosynthesis of AMP from IMP. The sequence is that of Adenylosuccinate synthetase from Chaetomium globosum (strain ATCC 6205 / CBS 148.51 / DSM 1962 / NBRC 6347 / NRRL 1970) (Soil fungus).